The sequence spans 388 residues: Galactokinase (388 aa).

A substrate-binding site is contributed by 33–36 (EHTD). ATP-binding positions include S67 and 125–131 (GSGLSSS). Mg(2+)-binding residues include S131 and E163. The active-site Proton acceptor is the D175. Y225 lines the substrate pocket.

This sequence belongs to the GHMP kinase family. GalK subfamily.

It localises to the cytoplasm. The catalysed reaction is alpha-D-galactose + ATP = alpha-D-galactose 1-phosphate + ADP + H(+). It participates in carbohydrate metabolism; galactose metabolism. In terms of biological role, catalyzes the transfer of the gamma-phosphate of ATP to D-galactose to form alpha-D-galactose-1-phosphate (Gal-1-P). The protein is Galactokinase of Lactobacillus helveticus (Lactobacillus suntoryeus).